A 238-amino-acid chain; its full sequence is Uridylate kinase (238 aa).

12 to 15 (KVSG) is a binding site for ATP. Gly54 is a binding site for UMP. ATP-binding residues include Gly55 and Arg59. Residues Asp74 and 135–142 (TGNPYFTT) contribute to the UMP site. Residues Thr162, Asn163, Tyr168, and Asp171 each coordinate ATP.

It belongs to the UMP kinase family. Homohexamer.

It is found in the cytoplasm. The enzyme catalyses UMP + ATP = UDP + ADP. It functions in the pathway pyrimidine metabolism; CTP biosynthesis via de novo pathway; UDP from UMP (UMPK route): step 1/1. Its activity is regulated as follows. Inhibited by UTP. Catalyzes the reversible phosphorylation of UMP to UDP. In Azorhizobium caulinodans (strain ATCC 43989 / DSM 5975 / JCM 20966 / LMG 6465 / NBRC 14845 / NCIMB 13405 / ORS 571), this protein is Uridylate kinase.